The sequence spans 372 residues: Alpha-parvin (372 aa).

Low complexity predominate over residues 1–11 (MATSPQKSPSV). Residues 1 to 44 (MATSPQKSPSVPKSPTPKSPPSRKKDDSFLGKLGGTLARRKKAK) are disordered. A2 bears the N-acetylalanine mark. S8, S14, and S19 each carry phosphoserine. An interaction with ARHGAP31 region spans residues 21–25 (PSRKK). Residues S28 and S62 each carry the phosphoserine modification. Calponin-homology (CH) domains lie at 95-202 (QELM…QYFR) and 262-369 (NVVK…TKYR). Positions 223–372 (GILQSRQIQE…NLFTKYRNVE (150 aa)) are required for interaction with TESK1 and ILK.

This sequence belongs to the parvin family. In terms of assembly, component of the heterotrimeric IPP (ILK-PINCH-PARVIN) complex composed of ILK, LIMS1/PINCH and PARVA; the complex binds to F-actin via the C-terminal tail of LIMS1 and the N-terminal region of PARVA, promoting F-actin filament bundling. Interacts with TGFB1I1. Interacts with ARHGAP31. Interacts with the actin cytoskeleton. Interacts (via C-terminus) with TESK1 (via C-terminus); the interaction inhibits TESK1 kinase activity. Interacts with PXN/PAXILLIN (via LD motif 4). As to expression, widely expressed.

It localises to the cell junction. The protein localises to the focal adhesion. Its subcellular location is the cell membrane. It is found in the cytoplasm. The protein resides in the cytoskeleton. It localises to the myofibril. The protein localises to the sarcomere. Its subcellular location is the z line. Plays a role in sarcomere organization and in smooth muscle cell contraction. Required for normal development of the embryonic cardiovascular system, and for normal septation of the heart outflow tract. Plays a role in sprouting angiogenesis and is required for normal adhesion of vascular smooth muscle cells to endothelial cells during blood vessel development. Plays a role in the reorganization of the actin cytoskeleton, formation of lamellipodia and ciliogenesis. Plays a role in the establishment of cell polarity, cell adhesion, cell spreading, and directed cell migration. Within the IPP (ILK-PINCH-PARVIN) complex, binds to F-actin, promoting F-actin bundling, a process required to generate force for actin cytoskeleton reorganization and subsequent dynamic cell adhesion events such as cell spreading and migration. In Rattus norvegicus (Rat), this protein is Alpha-parvin (Parva).